The sequence spans 493 residues: Glutamyl-tRNA(Gln) amidotransferase subunit A (493 aa).

Catalysis depends on charge relay system residues K78 and S158. S182 (acyl-ester intermediate) is an active-site residue.

The protein belongs to the amidase family. GatA subfamily. As to quaternary structure, heterotrimer of A, B and C subunits.

The enzyme catalyses L-glutamyl-tRNA(Gln) + L-glutamine + ATP + H2O = L-glutaminyl-tRNA(Gln) + L-glutamate + ADP + phosphate + H(+). In terms of biological role, allows the formation of correctly charged Gln-tRNA(Gln) through the transamidation of misacylated Glu-tRNA(Gln) in organisms which lack glutaminyl-tRNA synthetase. The reaction takes place in the presence of glutamine and ATP through an activated gamma-phospho-Glu-tRNA(Gln). In Rickettsia canadensis (strain McKiel), this protein is Glutamyl-tRNA(Gln) amidotransferase subunit A.